A 215-amino-acid chain; its full sequence is Thymidylate kinase (215 aa).

7-14 (GMEGSGKS) contributes to the ATP binding site.

This sequence belongs to the thymidylate kinase family.

It catalyses the reaction dTMP + ATP = dTDP + ADP. Functionally, phosphorylation of dTMP to form dTDP in both de novo and salvage pathways of dTTP synthesis. The sequence is that of Thymidylate kinase from Nitratidesulfovibrio vulgaris (strain DSM 19637 / Miyazaki F) (Desulfovibrio vulgaris).